Reading from the N-terminus, the 629-residue chain is Tudor and KH domain-containing protein homolog (629 aa).

Residues 9–29 (LPIALGLSLVTVTAFVAYYVL) traverse the membrane as a helical segment. 2 consecutive KH domains span residues 46 to 109 (INTI…ETLI) and 119 to 185 (IMSE…KKLV). Residues 198-240 (IEQSKRPPRHSSSPPSPCPSPGDRDADADAQGDVDHTRVKYKR) form a disordered region. Residues 219–240 (GDRDADADAQGDVDHTRVKYKR) are compositionally biased toward basic and acidic residues. The Tudor domain maps to 297–362 (HVSVGQVVAA…CELRADLLRL (66 aa)). The segment at 464 to 526 (PAPSPRPSPP…GDDSKDKDGI (63 aa)) is disordered.

It belongs to the Tdrkh family. As to quaternary structure, interacts with (symmetrically methylated) Siwi. Interacts with (symmetrically methylated) Ago3. Interacts with PNLDC1/trimmer; interaction takes place on the mitochondrial surface and recruits PNLDC1/trimmer to Siwi-bound pre-piRNAs.

Its subcellular location is the mitochondrion outer membrane. Participates in the primary piRNA biogenesis pathway and is required during spermatogenesis to repress transposable elements and prevent their mobilization, which is essential for the germline integrity. The piRNA metabolic process mediates the repression of transposable elements during meiosis by forming complexes composed of piRNAs and Piwi proteins (Siwi or Ago3) and govern the methylation and subsequent repression of transposons. Required for the final steps of primary piRNA biogenesis by participating in the processing of 31-37 nt intermediates into mature piRNAs: acts by recruiting the exonuclease PNLDC1/trimmer to Siwi-bound pre-piRNAs. The polypeptide is Tudor and KH domain-containing protein homolog (Bombyx mori (Silk moth)).